Consider the following 165-residue polypeptide: Ribosome maturation factor RimM (165 aa).

Positions 94 to 163 constitute a PRC barrel domain; it reads EDEFYIADLN…KDYVTLNYQR (70 aa).

It belongs to the RimM family. As to quaternary structure, binds ribosomal protein uS19.

The protein resides in the cytoplasm. An accessory protein needed during the final step in the assembly of 30S ribosomal subunit, possibly for assembly of the head region. Essential for efficient processing of 16S rRNA. May be needed both before and after RbfA during the maturation of 16S rRNA. It has affinity for free ribosomal 30S subunits but not for 70S ribosomes. In Rickettsia akari (strain Hartford), this protein is Ribosome maturation factor RimM.